The sequence spans 155 residues: Movement protein TGB3 (155 aa).

Residues 1–59 are Cytoplasmic-facing; it reads MAMPHPLECCCPQCLPSSESFPIYGEQEIPCSETQAETTPVEKTVRANVLTDILDDHYY. Residues 60–80 form a helical membrane-spanning segment; it reads AILASLFIIALWLLYIYLSSI. The Lumenal portion of the chain corresponds to 81 to 130; it reads PTETGPYFYQDLNSVKIYGIGATNPEVIAAIHHWQKYPFGESPMWGGLIS. Positions 89-93 match the Involved in plasmodesmata targeting and virus cell-to-cell movement motif; the sequence is YQDLN. The helical transmembrane segment at 131-151 threads the bilayer; it reads VLSILLKPLTLVFALSFFLLL. Residues 150–155 are required for attachment to the host plasmodesmata-associated membrane compartments; it reads LLSSKR. The Cytoplasmic portion of the chain corresponds to 152 to 155; sequence SSKR.

Belongs to the virgaviridae TGB3 movement protein family. In terms of assembly, interacts with movement proteins TGB1 and TGB2. TGB1-TGB3-TGB2 complex formation is enhanced by ATP hydrolysis.

The protein resides in the host cell junction. The protein localises to the host plasmodesma. Its subcellular location is the host endoplasmic reticulum membrane. It localises to the host cytoplasm. It is found in the host cytoskeleton. Functionally, participates in the transport of viral genome to neighboring plant cells directly through plasmodesmata, without any budding. TGBp2 and TGBp3 are necessary for intracellular delivery of TGBp1-containing vRNPs to plasmodesmata. Can gate plasmodesmata and increase their size exclusion limit. Induces host actin cytoskeleton network thickening, which probably plays a major role in virus cell-to-cell movement. This chain is Movement protein TGB3, found in Hordeum vulgare (Barley).